The chain runs to 274 residues: Eukaryotic translation initiation factor 3 subunit G (274 aa).

An RRM domain is found at 192–270 (TAIRISNLSN…LILNVEWSKP (79 aa)).

The protein belongs to the eIF-3 subunit G family. As to quaternary structure, component of the eukaryotic translation initiation factor 3 (eIF-3) complex.

It localises to the cytoplasm. Functionally, RNA-binding component of the eukaryotic translation initiation factor 3 (eIF-3) complex, which is involved in protein synthesis of a specialized repertoire of mRNAs and, together with other initiation factors, stimulates binding of mRNA and methionyl-tRNAi to the 40S ribosome. The eIF-3 complex specifically targets and initiates translation of a subset of mRNAs involved in cell proliferation. This subunit can bind 18S rRNA. The sequence is that of Eukaryotic translation initiation factor 3 subunit G from Bombyx mori (Silk moth).